Consider the following 214-residue polypeptide: Dephospho-CoA kinase (214 aa).

Positions 4–204 (IVGLTGGIGS…QRYLQLAQQK (201 aa)) constitute a DPCK domain. 12–17 (GSGKST) lines the ATP pocket.

It belongs to the CoaE family.

It is found in the cytoplasm. It carries out the reaction 3'-dephospho-CoA + ATP = ADP + CoA + H(+). It participates in cofactor biosynthesis; coenzyme A biosynthesis; CoA from (R)-pantothenate: step 5/5. Functionally, catalyzes the phosphorylation of the 3'-hydroxyl group of dephosphocoenzyme A to form coenzyme A. The polypeptide is Dephospho-CoA kinase (Mannheimia succiniciproducens (strain KCTC 0769BP / MBEL55E)).